Consider the following 218-residue polypeptide: Adenylate kinase (218 aa).

An ATP-binding site is contributed by 10–15 (GVGKGT). Positions 30–59 (STGDMLRSAIKQGTELGLKAKSFIDKGELV) are NMP. AMP-binding positions include T31, R36, 57–59 (ELV), 86–89 (GFPR), and Q93. Residues 127-164 (GRRIAPSTGKVYHVVYNPPKVEGKCDETGEDLIIREDD) form an LID region. ATP-binding positions include R128 and 137 to 138 (VY). Residues R161 and R172 each contribute to the AMP site. Q200 serves as a coordination point for ATP.

Belongs to the adenylate kinase family. As to quaternary structure, monomer.

The protein resides in the cytoplasm. The enzyme catalyses AMP + ATP = 2 ADP. It functions in the pathway purine metabolism; AMP biosynthesis via salvage pathway; AMP from ADP: step 1/1. Its function is as follows. Catalyzes the reversible transfer of the terminal phosphate group between ATP and AMP. Plays an important role in cellular energy homeostasis and in adenine nucleotide metabolism. This chain is Adenylate kinase, found in Chloroherpeton thalassium (strain ATCC 35110 / GB-78).